A 387-amino-acid polypeptide reads, in one-letter code: Transmembrane protein 120 homolog (387 aa).

A coiled-coil region spans residues 1–39 (MNIDSLKNEWEELNKEFAELESCNRRYIELLEQLHSHQQ). A glycan (N-linked (GlcNAc...) asparagine) is linked at Asn111. The next 6 helical transmembrane spans lie at 130–150 (FKLILNVIGLIMAFFNLIFNY), 155–175 (LAFIFLLVWYYCTLTIRESIL), 191–211 (FISTVAAGVLLVWPQGEHWQI), 216–238 (FMYFNVYISIVQYLQFGYQKGLL), 264–284 (GLSFLLPFLFIGYGYQAYNAW), and 302–322 (VMSGLFLLLFVGNMATTLWVV). The interval 346–387 (RKEMKNSASDLDLSSGSKLSPTATTTTSIATATQTPAEKKET) is disordered. 3 positions are modified to phosphoserine: Ser352, Ser354, and Ser365. Residues 352 to 381 (SASDLDLSSGSKLSPTATTTTSIATATQTP) are compositionally biased toward low complexity.

It belongs to the TMEM120 family.

Its subcellular location is the membrane. This chain is Transmembrane protein 120 homolog, found in Drosophila melanogaster (Fruit fly).